Here is a 415-residue protein sequence, read N- to C-terminus: ATP-dependent RNA helicase RhlB (415 aa).

The Q motif signature appears at 9-37; the sequence is QRFSALPLHPIVRGALAKKGFDFCTPIQA. One can recognise a Helicase ATP-binding domain in the interval 40-218; that stretch reads LPISLNGRDV…FEDMNDPEYI (179 aa). 53-60 is a binding site for ATP; it reads AQTGTGKT. The short motif at 164-167 is the DEAD box element; it reads DEAD. The Helicase C-terminal domain maps to 241 to 389; the sequence is DKMALLLTLM…VSQYETEALL (149 aa).

This sequence belongs to the DEAD box helicase family. RhlB subfamily. As to quaternary structure, component of the RNA degradosome, which is a multiprotein complex involved in RNA processing and mRNA degradation.

It localises to the cytoplasm. The catalysed reaction is ATP + H2O = ADP + phosphate + H(+). DEAD-box RNA helicase involved in RNA degradation. Has RNA-dependent ATPase activity and unwinds double-stranded RNA. This is ATP-dependent RNA helicase RhlB from Haemophilus influenzae (strain PittGG).